The following is a 652-amino-acid chain: MAEISLTFPDGAIKKFDEGIKPIGVAESISKSLAKKSVSGKINGSYIGMNDVITESGDFQLITTSDSEALDLLRHSASHLLAQALKRIPKFANIHFGVGPFIENGFYYDTDNGAGNQVSIEDFPEIEAIMHKIVKEDLPILSREITRDEALEIFADDPYKVELVNDLPVDEKITIAVQGDHIELDKGGLVPSTGWIKHFKLTSVAGAYWRGDSSNPMMQRVYGTAFWKAADVEAEIARREEAKERDHRVIGRDLDLFFTSQEVGSGLPVWLPNGATIRRQVERYITDKELSNGYQHVYTPVLSNLNLYKTSGHWDHYREDMFPPMDMGDGEFLELRPMNCPSHIMVFNHKPRSYRELPMRIAELGMMHRYEKSGALTGLSRVREMTLNDGHTFVEPEKLEEEFKSILTMMMGVYRDFNIKDYRFRLSYRDPKNTEKYFDDDEMWEKSQKQLKTAMDDLGLDYFEAEGEAAFYGPKLDVQTKTALGNEETLSTIQLDFLLPERFDLKYIGRDGLDNHRPVMLHRGIVGTMERFTAYLIEMYKGAFPTWLSPLQVQIIPVNLGAHGNYANAVQQKLQDAGLRANVETKDAKMGYLIREAQTNKIPYTLVLGDSEVNSNTVTVRKYGDTKTVTMSYDEFQYLILSDVSNYSRETE.

A TGS domain is found at 1–63 (MAEISLTFPD…TESGDFQLIT (63 aa)). Positions 246–545 (DHRVIGRDLD…LIEMYKGAFP (300 aa)) are catalytic. Cys340, His391, and His522 together coordinate Zn(2+).

This sequence belongs to the class-II aminoacyl-tRNA synthetase family. In terms of assembly, homodimer. The cofactor is Zn(2+).

Its subcellular location is the cytoplasm. It catalyses the reaction tRNA(Thr) + L-threonine + ATP = L-threonyl-tRNA(Thr) + AMP + diphosphate + H(+). Its function is as follows. Catalyzes the attachment of threonine to tRNA(Thr) in a two-step reaction: L-threonine is first activated by ATP to form Thr-AMP and then transferred to the acceptor end of tRNA(Thr). Also edits incorrectly charged L-seryl-tRNA(Thr). The polypeptide is Threonine--tRNA ligase (Leuconostoc mesenteroides subsp. mesenteroides (strain ATCC 8293 / DSM 20343 / BCRC 11652 / CCM 1803 / JCM 6124 / NCDO 523 / NBRC 100496 / NCIMB 8023 / NCTC 12954 / NRRL B-1118 / 37Y)).